A 431-amino-acid chain; its full sequence is Serine--tRNA ligase (431 aa).

Residue 235-237 participates in L-serine binding; that stretch reads TAE. Residues 266–268 and V282 each bind ATP; that span reads RRE. Residue E289 coordinates L-serine. 353–356 lines the ATP pocket; the sequence is EASS. S389 is an L-serine binding site.

Belongs to the class-II aminoacyl-tRNA synthetase family. Type-1 seryl-tRNA synthetase subfamily. As to quaternary structure, homodimer. The tRNA molecule binds across the dimer.

It localises to the cytoplasm. It catalyses the reaction tRNA(Ser) + L-serine + ATP = L-seryl-tRNA(Ser) + AMP + diphosphate + H(+). The catalysed reaction is tRNA(Sec) + L-serine + ATP = L-seryl-tRNA(Sec) + AMP + diphosphate + H(+). The protein operates within aminoacyl-tRNA biosynthesis; selenocysteinyl-tRNA(Sec) biosynthesis; L-seryl-tRNA(Sec) from L-serine and tRNA(Sec): step 1/1. Catalyzes the attachment of serine to tRNA(Ser). Is also able to aminoacylate tRNA(Sec) with serine, to form the misacylated tRNA L-seryl-tRNA(Sec), which will be further converted into selenocysteinyl-tRNA(Sec). In Prosthecochloris aestuarii (strain DSM 271 / SK 413), this protein is Serine--tRNA ligase.